The chain runs to 105 residues: Large ribosomal subunit protein uL24 (105 aa).

Belongs to the universal ribosomal protein uL24 family. In terms of assembly, part of the 50S ribosomal subunit.

In terms of biological role, one of two assembly initiator proteins, it binds directly to the 5'-end of the 23S rRNA, where it nucleates assembly of the 50S subunit. Its function is as follows. One of the proteins that surrounds the polypeptide exit tunnel on the outside of the subunit. In Novosphingobium aromaticivorans (strain ATCC 700278 / DSM 12444 / CCUG 56034 / CIP 105152 / NBRC 16084 / F199), this protein is Large ribosomal subunit protein uL24.